Consider the following 514-residue polypeptide: MTTRKRPLALLILDGWGYRENTQKNAVFHANTPVLDQLNAKYPNSLISGSGIDVGLPDGQMGNSEVGHINIGSGRIVYQELTRISKAIDDGEFDTNPALTKAIDDAIEVNGAVHIMGLLSPGGVHSHQDHIEAMCRLAVKRGAKKVYLHAFLDGRDTPPRSAKPGLAHFEELFKSLGTGQVASVIGRYYAMDRDNRWDRVSQAYELITEGKSLHQSATAVDAIEAAYTRDENDEFVGSTVIPDAQGNIAKLVDNDALIFMNFRADRARQITRSFVDADFDGFERAVTPKINFVMLTEYAANIKAAIAYPSSDLVNTLGETLQDRDLTQLRISETEKYAHVTFFFNGGKEEPFKGEDRILIQSPKVATYDLQPEMSSTELTDKLVAAIESTEYDVIICNYPNGDMVGHTGNFDAAVKACEAVDTCIGRVVEALEKVGGECLITADHGNAEQMTDESTGQAHTAHTSELIPLIYVGRDAEIENGGRLSDLAPTMLTLMGQDVPEEMTGRSIIKLKE.

Mn(2+)-binding residues include D14 and S64. S64 (phosphoserine intermediate) is an active-site residue. Substrate contacts are provided by residues H125, 155 to 156 (RD), R187, R193, 263 to 266 (RADR), and K336. Positions 403, 407, 444, 445, and 463 each coordinate Mn(2+).

The protein belongs to the BPG-independent phosphoglycerate mutase family. In terms of assembly, monomer. The cofactor is Mn(2+).

The catalysed reaction is (2R)-2-phosphoglycerate = (2R)-3-phosphoglycerate. It participates in carbohydrate degradation; glycolysis; pyruvate from D-glyceraldehyde 3-phosphate: step 3/5. Catalyzes the interconversion of 2-phosphoglycerate and 3-phosphoglycerate. The chain is 2,3-bisphosphoglycerate-independent phosphoglycerate mutase from Shewanella pealeana (strain ATCC 700345 / ANG-SQ1).